Here is a 149-residue protein sequence, read N- to C-terminus: Chromophore lyase CpcS/CpeS homolog (149 aa).

It belongs to the CpcS/CpeS biliprotein lyase family.

The protein resides in the plastid. The protein localises to the chloroplast. Its function is as follows. Might function to covalently attach a chromophore to Cys residue(s) of phycobiliproteins. The chain is Chromophore lyase CpcS/CpeS homolog from Pyropia yezoensis (Susabi-nori).